Reading from the N-terminus, the 752-residue chain is MASKVTDARDWYQKKIGAYDQQIWEKSVEQREIKGLRNKPKKTGHVKPDLIDVDLVRGSAFAKAKPESPWTSLTRKGIVRVVFFPFFYRWWLQVTSRVIFFWLLVLYLLQVAAVVLFCTAQSPHNIPLTEVIGPIWLMLLLGTVHCQIVSTRTPKPPPSTGVKRRRKLRKAAHLEVHREGDGSSTTDNTQEGTVQSYGTSTSYSIGAVFRDIWHAAFFLSGSKKAKNSIDKSTETDNGYVSLEGKKTGKSSEECAQAQERLCEVIKPEESGWSTTTMRETFGTPSHHKETHRTVTNLSDEVSSEEGPETGYSLRRNVERTSSDGTLRNRKSHHYKKHYPLEDTPKSGTSCSSRCSSSRQDSESTRPESETEDVWEDLLHCAECHSSCTSETDVESPQMNPCVKKEYRDDPFHQSHLPWIHSLNPGLEKISAIVWEGNDCKKADMSVLEISGMIMNRVNSYIPGIGYQIFGNIISLILGLMPFVFRLSQAKDLEQLAAHSATELCITAFGSNGDILVLSMVVISFVVRVSLVWIFFFLLCVAERTYKQRLLFAKLFGHLTSARRARKSEVPHFRLKKVQNIKMWLSLRSYLKRRGPQRSVDVIVSSAFLLTISVVFICCAQLLHMHEIFLDCHYNWELVIWCISLTLFLLRFVTLGSETSKKYSNTSILLTEQINLYLKMEKKPNKKEELTLVNNVLKLATKLLKELDSPFRLYGLTMNPLLYNITQVVILSAVSGVISDLLGFNLKLWKIKS.

The region spanning 6–153 (TDARDWYQKK…VHCQIVSTRT (148 aa)) is the PHTF domain. 2 helical membrane passes run 98–118 (VIFF…VLFC) and 126–146 (IPLT…TVHC). Disordered regions lie at residues 173–194 (HLEV…EGTV), 227–251 (NSID…GKSS), and 273–371 (STTT…SETE). Polar residues predominate over residues 182–194 (GSSTTDNTQEGTV). A glycan (N-linked (GlcNAc...) asparagine) is linked at asparagine 296. Residues 327-337 (RNRKSHHYKKH) show a composition bias toward basic residues. A compositionally biased stretch (low complexity) spans 346-358 (SGTSCSSRCSSSR). Residues 359-368 (QDSESTRPES) show a composition bias toward basic and acidic residues. 4 helical membrane-spanning segments follow: residues 464-484 (IGYQ…PFVF), 520-540 (VVIS…LLCV), 601-621 (VIVS…CAQL), and 635-655 (WELV…VTLG). 2 N-linked (GlcNAc...) asparagine glycosylation sites follow: asparagine 664 and asparagine 723. A helical membrane pass occupies residues 727–747 (VVILSAVSGVISDLLGFNLKL).

It is found in the membrane. The sequence is that of Protein PHTF2 (PHTF2) from Gallus gallus (Chicken).